The primary structure comprises 151 residues: Large ribosomal subunit protein bL9 (151 aa).

It belongs to the bacterial ribosomal protein bL9 family.

Functionally, binds to the 23S rRNA. The chain is Large ribosomal subunit protein bL9 from Rhodococcus opacus (strain B4).